The chain runs to 351 residues: Tsukushi-A (351 aa).

Residues 1–17 form the signal peptide; sequence MALSSWIFFLLVHGIVG. LRR repeat units follow at residues 59-82, 85-108, 109-132, 134-155, 158-181, 182-203, 204-226, 252-276, and 277-300; these read PLDTSYLDLSSNRLKRINESVLSG, YTTLMNLNLSYNQIVKISYSTFSK, LRYLESLDLSHNLLETLPDGSFLY, RLTELDLSSNKIQKVGVGAFTL, QGRSMTINLANNEIHSIFRGAERP, VPNIHSLMLYGNQLLSVPDLHG, IPLRHLNLDRNPLSKIEKVSFLG, LTSLLELDLSNNPNLKSLSSDMFFG, and LKALQELNLAYSGVASLPKDIMLH.

As to quaternary structure, interacts with bmp4. Interacts with dll1 (via extracellular region). Interacts with fgf8; inhibits fgf8 signaling. Interacts with nodal2/Xnr2; enhances nodal2 activity. In terms of tissue distribution, during embryogenesis, localized to the animal hemisphere during late blastula and gastrula stages. At stage 10, expression is also detected around the dorsal blastopore lip. Expressed in the mandibular crest segment, branchial crest segment and differentiating somites at stage 21/22. Expressed in the germ ring including the shield at shield stage and in the tailbud at the 10-somite stage. At the early neurula stage (stage 13), expression is hardly detectable in the presumptive neural plate region, and restricted to the non-neural ectoderm where its levels increase by stage 14, especially in the presumptive anterior neural fold. Also expressed in the prospective cranial neural crest. At the early tailbud stage (stage 23), expressed in cranial neural crest cells, the dorsal retina and the lens placode.

The protein localises to the secreted. Functionally, contributes to various developmental events through its interactions with multiple signaling pathways. Dorsalizing factor which functions as an inhibitor of bone morphogenetic proteins (BMP) during gastrulation. Promotes dll1-dependent activation of Notch signaling and is required for neural crest formation. Induces endoderm and dorsal mesoderm formation by enhancing nodal2/Xnr2 activity while inhibiting ventrolateral mesoderm formation through inhibition of fgf8. This chain is Tsukushi-A, found in Xenopus laevis (African clawed frog).